A 381-amino-acid chain; its full sequence is MDVEHHKSGHISRPTVDIPPRKLLSSAKSPSSVSSPLRDYKEQKDYCYDSDSEDPYAGDHFRMYEFKIRRCTRSRSHDWTDCPFSHPGEKARRRDPRRFHYTGEVCPEFSRHGDCSRGDECGFAHGVFECWLHPSRYRTEACKDGKHCKRKVCFFAHSPRQLRVLPPSPENHISGGCGGSPSSSPASVLSNKNNRCCLFCSHSPTSTLLNLSRSPSSSPPLSPADKADAFSRLSRRRTAVLNELISSLDSLSLTEALAASSSSPVTMPISTATMIASSNLSSNHHHHRLPPWLDVGDRDLQLQQSSPLRFALSPSSTPSYLHGQLQPPPSSFFGDEFTPRGGRLSDFSVAAAAAAQARDKNSFEVGSSGDLDLGWVNDLLT.

Residues 1–39 (MDVEHHKSGHISRPTVDIPPRKLLSSAKSPSSVSSPLRD) are disordered. Residues 21 to 37 (RKLLSSAKSPSSVSSPL) show a composition bias toward low complexity. 2 consecutive C3H1-type zinc fingers follow at residues 101-128 (YTGE…HGVF) and 137-159 (YRTE…AHSP).

As to quaternary structure, interacts with MARD1/FLZ9 and RD21A via its CCCH zing finger domains.

The protein localises to the cytoplasm. It localises to the stress granule. The protein resides in the P-body. This is Zinc finger CCCH domain-containing protein 61 from Arabidopsis thaliana (Mouse-ear cress).